Consider the following 634-residue polypeptide: Heat shock 70-related protein 1, mitochondrial (634 aa).

The N-terminal 20 residues, 1–20, are a transit peptide targeting the mitochondrion; the sequence is MFARRVCGSAAASAACLARH. Residues 538–614 are a coiled coil; that stretch reads SEQHAEADRV…AAATDKLQKA (77 aa).

It belongs to the heat shock protein 70 family.

The protein localises to the mitochondrion. This Leishmania major protein is Heat shock 70-related protein 1, mitochondrial (HSP70.1).